The following is a 62-amino-acid chain: ATP synthase subunit epsilon, mitochondrial (62 aa).

Position 52 is a phosphothreonine (Thr52).

Belongs to the eukaryotic ATPase epsilon family. F-type ATPases have 2 components, CF(1) - the catalytic core - and CF(0) - the membrane proton channel. CF(1) has five subunits: alpha(3), beta(3), gamma(1), delta(1), epsilon(1). CF(0) has three main subunits: a, b and c.

It is found in the mitochondrion. The protein resides in the mitochondrion inner membrane. Mitochondrial membrane ATP synthase (F(1)F(0) ATP synthase or Complex V) produces ATP from ADP in the presence of a proton gradient across the membrane which is generated by electron transport complexes of the respiratory chain. F-type ATPases consist of two structural domains, F(1) - containing the extramembraneous catalytic core, and F(0) - containing the membrane proton channel, linked together by a central stalk and a peripheral stalk. During catalysis, ATP synthesis in the catalytic domain of F(1) is coupled via a rotary mechanism of the central stalk subunits to proton translocation. Part of the complex F(1) domain and of the central stalk which is part of the complex rotary element. Rotation of the central stalk against the surrounding alpha(3)beta(3) subunits leads to hydrolysis of ATP in three separate catalytic sites on the beta subunits. The polypeptide is ATP synthase subunit epsilon, mitochondrial (ATP15) (Saccharomyces cerevisiae (strain ATCC 204508 / S288c) (Baker's yeast)).